Here is a 31-residue protein sequence, read N- to C-terminus: Photosystem I reaction center subunit XII (31 aa).

Residues 7–26 (QIYIALLTALIPAFFALKLG) form a helical membrane-spanning segment.

The protein belongs to the PsaM family.

The protein resides in the plastid. It is found in the chloroplast thylakoid membrane. This Euglena mutabilis protein is Photosystem I reaction center subunit XII.